Consider the following 122-residue polypeptide: MIQTQSMLDVADNSGARRVMCIKVLGGSHRRYAGIGDIIKVTVKEAIPRGKVKKGQVMTAVVVRTKHGVRRTDGSIIRFDGNAAVLLNSKQEPIGTRIFGPVTRELRTEKFMKIVSLAPEVL.

Belongs to the universal ribosomal protein uL14 family. In terms of assembly, part of the 50S ribosomal subunit. Forms a cluster with proteins L3 and L19. In the 70S ribosome, L14 and L19 interact and together make contacts with the 16S rRNA in bridges B5 and B8.

Functionally, binds to 23S rRNA. Forms part of two intersubunit bridges in the 70S ribosome. This chain is Large ribosomal subunit protein uL14, found in Pseudomonas paraeruginosa (strain DSM 24068 / PA7) (Pseudomonas aeruginosa (strain PA7)).